The following is a 330-amino-acid chain: Mas-related G-protein coupled receptor member X2 (330 aa).

The Extracellular segment spans residues 1-33 (MDPTTPAWGNESTTMNGNDQALPLLCGKETLIP). The helical transmembrane segment at 34–54 (VFLILFIALVGLVGNGFVLWL) threads the bilayer. The Cytoplasmic segment spans residues 55–63 (LGFCMRRNA). The helical transmembrane segment at 64-84 (FSVYVLSLAGADFLFLCFQLI) threads the bilayer. Topologically, residues 85 to 96 (NCLVYLSNFFCS) are extracellular. A helical transmembrane segment spans residues 97–117 (ISIDFPSFFTTVMTCAYLAGL). Residues 118 to 144 (SMLSTISTERCLSVLWPIWYRCRRPRH) are Cytoplasmic-facing. Residues 145 to 165 (LSAVVCVLLWALSLLLSILEG) form a helical membrane-spanning segment. The Extracellular segment spans residues 166–184 (KFCGFFFSDGDSGWCQTFD). A helical membrane pass occupies residues 185–205 (FITAAWLIFLFMVLCGSSLAL). Topologically, residues 206 to 228 (LVRILCGSRGLPLTRLYLTILLT) are cytoplasmic. The helical transmembrane segment at 229–249 (VLVFLLCGLPFGIQWFLILWI) threads the bilayer. The Extracellular portion of the chain corresponds to 250 to 264 (WENSDVLFCHIHPVS). Residues 265–285 (VVLSSLNSSANPIIYFFVGTF) traverse the membrane as a helical segment. At 286-330 (RKQWRLQQPILKLALQRALQDTAEVDHSEGCFRQGTPEMSRSSLV) the chain is on the cytoplasmic side.

This sequence belongs to the G-protein coupled receptor 1 family. Mas subfamily.

It is found in the cell membrane. In terms of biological role, mast cell-specific receptor for basic secretagogues, i.e. cationic amphiphilic drugs, as well as endo- or exogenous peptides, consisting of a basic head group and a hydrophobic core. Recognizes and binds small molecules containing a cyclized tetrahydroisoquinoline (THIQ), such as non-steroidal neuromuscular blocking drugs (NMBDs), including tubocurarine and atracurium. In response to these compounds, mediates pseudo-allergic reactions characterized by histamine release, inflammation and airway contraction. The chain is Mas-related G-protein coupled receptor member X2 (MRGPRX2) from Pongo pygmaeus (Bornean orangutan).